The chain runs to 460 residues: A-type ATP synthase subunit B (460 aa).

The protein belongs to the ATPase alpha/beta chains family. Has multiple subunits with at least A(3), B(3), C, D, E, F, H, I and proteolipid K(x).

The protein localises to the cell membrane. Functionally, component of the A-type ATP synthase that produces ATP from ADP in the presence of a proton gradient across the membrane. The B chain is a regulatory subunit. The protein is A-type ATP synthase subunit B of Thermoplasma volcanium (strain ATCC 51530 / DSM 4299 / JCM 9571 / NBRC 15438 / GSS1).